The chain runs to 478 residues: Proline--tRNA ligase (478 aa).

Belongs to the class-II aminoacyl-tRNA synthetase family. ProS type 3 subfamily. As to quaternary structure, homodimer.

It is found in the cytoplasm. The enzyme catalyses tRNA(Pro) + L-proline + ATP = L-prolyl-tRNA(Pro) + AMP + diphosphate. In terms of biological role, catalyzes the attachment of proline to tRNA(Pro) in a two-step reaction: proline is first activated by ATP to form Pro-AMP and then transferred to the acceptor end of tRNA(Pro). The chain is Proline--tRNA ligase from Methanothrix thermoacetophila (strain DSM 6194 / JCM 14653 / NBRC 101360 / PT) (Methanosaeta thermophila).